Here is a 263-residue protein sequence, read N- to C-terminus: Palmitoyltransferase ZDHHC21 (263 aa).

Residues 1-4 lie on the Cytoplasmic side of the membrane; that stretch reads MKMR. Residues 5–25 traverse the membrane as a helical segment; that stretch reads LHFVVDPMGWFCMSMVFFVWI. Residues 26–44 are Extracellular-facing; sequence YNSFLIPKLVLLPHYAEGH. Residues 45-65 traverse the membrane as a helical segment; sequence ITAEPVICYYLASLLCFSALF. The Cytoplasmic segment spans residues 66-131; it reads RASTTDPGKL…WINNCVGEDN (66 aa). The DHHC domain maps to 90 to 140; that stretch reads ELCNKCNMMRPKRSHHCSRCGHCVRRMDHHCPWINNCVGEDNHWLFLQLCF. The active-site S-palmitoyl cysteine intermediate is the C120. The helical transmembrane segment at 132–152 threads the bilayer; sequence HWLFLQLCFYTQVLSFYTLVL. The Extracellular segment spans residues 153 to 181; the sequence is DFCQYYYFLPLSSVDQADFAVHHELALLR. A helical transmembrane segment spans residues 182-202; sequence VSCFMGLIMFGGISSLFYTQV. The Cytoplasmic portion of the chain corresponds to 203–263; sequence KGILTDTTTI…KLNLTIRSHV (61 aa).

This sequence belongs to the DHHC palmitoyltransferase family.

The protein resides in the golgi apparatus membrane. Its subcellular location is the golgi apparatus. It localises to the cis-Golgi network membrane. The protein localises to the cell membrane. The catalysed reaction is L-cysteinyl-[protein] + hexadecanoyl-CoA = S-hexadecanoyl-L-cysteinyl-[protein] + CoA. Palmitoyltransferase that catalyzes the addition of palmitate onto various protein substrates. The polypeptide is Palmitoyltransferase ZDHHC21 (Danio rerio (Zebrafish)).